We begin with the raw amino-acid sequence, 343 residues long: Pyridoxal 5'-phosphate synthase subunit PDX1 (343 aa).

A D-ribose 5-phosphate-binding site is contributed by Asp73. Catalysis depends on Lys130, which acts as the Schiff-base intermediate with D-ribose 5-phosphate. Gly202 contacts D-ribose 5-phosphate. D-glyceraldehyde 3-phosphate is bound at residue Gln214. Residues Gly263 and 284–285 (GS) each bind D-ribose 5-phosphate.

The protein belongs to the PdxS/SNZ family.

It carries out the reaction aldehydo-D-ribose 5-phosphate + D-glyceraldehyde 3-phosphate + L-glutamine = pyridoxal 5'-phosphate + L-glutamate + phosphate + 3 H2O + H(+). It functions in the pathway cofactor biosynthesis; pyridoxal 5'-phosphate biosynthesis. Functionally, catalyzes the formation of pyridoxal 5'-phosphate from ribose 5-phosphate (RBP), glyceraldehyde 3-phosphate (G3P) and ammonia. The ammonia is provided by PDX2. Can also use ribulose 5-phosphate and dihydroxyacetone phosphate as substrates, resulting from enzyme-catalyzed isomerization of RBP and G3P, respectively. Also plays an indirect role in resistance to singlet oxygen-generating photosensitizers. This is Pyridoxal 5'-phosphate synthase subunit PDX1 (PDX1) from Cercospora nicotianae (Barn spot disease fungus).